The primary structure comprises 406 residues: S-adenosylmethionine synthase (406 aa).

Residue His16 coordinates ATP. Asp18 contributes to the Mg(2+) binding site. A K(+)-binding site is contributed by Glu44. 2 residues coordinate L-methionine: Glu57 and Gln100. The interval 100 to 110 (QSVDIAQGVDR) is flexible loop. Residues 165–167 (DAK), Asp241, 247–248 (RK), Ala264, and Lys268 each bind ATP. An L-methionine-binding site is contributed by Asp241. An L-methionine-binding site is contributed by Lys272.

Belongs to the AdoMet synthase family. As to quaternary structure, homotetramer; dimer of dimers. Mg(2+) is required as a cofactor. K(+) serves as cofactor.

It is found in the cytoplasm. It catalyses the reaction L-methionine + ATP + H2O = S-adenosyl-L-methionine + phosphate + diphosphate. It participates in amino-acid biosynthesis; S-adenosyl-L-methionine biosynthesis; S-adenosyl-L-methionine from L-methionine: step 1/1. Functionally, catalyzes the formation of S-adenosylmethionine (AdoMet) from methionine and ATP. The overall synthetic reaction is composed of two sequential steps, AdoMet formation and the subsequent tripolyphosphate hydrolysis which occurs prior to release of AdoMet from the enzyme. The sequence is that of S-adenosylmethionine synthase from Chromohalobacter salexigens (strain ATCC BAA-138 / DSM 3043 / CIP 106854 / NCIMB 13768 / 1H11).